The following is a 608-amino-acid chain: Serine/threonine-protein kinase ROP17 (608 aa).

An N-terminal signal peptide occupies residues 1–21 (MELVLCFVIITISGVIRESSA). Asn76 is a glycosylation site (N-linked (GlcNAc...) asparagine). In terms of domain architecture, Protein kinase spans 283-579 (LKKRGFLGGG…QQALEQFSLL (297 aa)). Residues 289-297 (LGGGGFGLV) and Lys312 each bind ATP. Asp436 serves as the catalytic Proton acceptor.

Belongs to the protein kinase superfamily. Ser/Thr protein kinase family. In terms of assembly, interacts with ROP5; interaction with ROP5 does not affect kinase activity. Interacts with human BCL2; the interaction probably promotes BCL2 phosphorylation and degradation.

The protein localises to the secreted. The protein resides in the cytoplasmic vesicle. It is found in the secretory vesicle. It localises to the rhoptry. Its subcellular location is the parasitophorous vacuole membrane. It catalyses the reaction L-threonyl-[protein] + ATP = O-phospho-L-threonyl-[protein] + ADP + H(+). It carries out the reaction L-seryl-[protein] + ATP = O-phospho-L-seryl-[protein] + ADP + H(+). In terms of biological role, protein kinase. Virulence factor. Promotes migration of Toxoplasma-infected macrophages through collagen matrix, facilitating parasite transport through tissues and systemic dissemination. Plays a role in the translocation of dense granule effectors, such as GRA16 and GRA24, across the parasitophorous vacuole membrane in Toxoplasma-infected host cells. Phosphorylates mouse IRGB6 (TGTP1/TGTP2), an immunity-related GTPase (IRG) that protects mice from infection by certain intracellular pathogens; the phosphorylation leads to the disassembly of IRGB6 polymers into monomers and dimers. May modulate gene expression in human cells. Promotes autophagy in human cells via modulation of the BCL2-BECN1 pathway. The polypeptide is Serine/threonine-protein kinase ROP17 (Toxoplasma gondii).